Reading from the N-terminus, the 169-residue chain is Secretory-abundant heat soluble protein 1 (169 aa).

The signal sequence occupies residues 1-19 (MSRAAVAIALLGCVVAAYG). Residues 31-60 (EWTGKSWMGKWESTDRIENFDAFISALGLP) are SAHS-c1. The SAHS-c2 stretch occupies residues 75 to 103 (WKEGDHYHHQISVPDKNYKNDVNFKLNEE). Asparagine 109 carries an N-linked (GlcNAc...) asparagine glycan. Residues 116 to 165 (KYTEDGGNLKAEVHVPSRNKVIHDEYKVNGDELEKTYKVGDVTAKRWYKK) form an SAHS-c3 region.

Belongs to the Secretory-abundant heat soluble protein (SAHS) family.

The protein localises to the secreted. Functionally, secreted heat soluble protein acting as a molecular shield in water-deficient condition. Tardigrade-specific intrinsically disordered proteins (TDPs) are essential for desiccation tolerance by forming non-crystalline amorphous solids upon desiccation, and this vitrified state mirrors their protective capabilities. The chain is Secretory-abundant heat soluble protein 1 from Ramazzottius varieornatus (Water bear).